Reading from the N-terminus, the 1470-residue chain is Gag-Pol polyprotein (1470 aa).

The N-myristoyl glycine; by host moiety is linked to residue Gly-2. The Nuclear export signal signature appears at 16–22 (FEHIRLR). Positions 26 to 32 (KKKYQIK) match the Nuclear localization signal motif. Positions 117–144 (AVTPPGGQQKNNTGGTATPGGSQNFPAQ) are disordered. Polar residues predominate over residues 122–144 (GGQQKNNTGGTATPGGSQNFPAQ). CCHC-type zinc fingers lie at residues 398–415 (PKCYNCGKFGHMQRQCPE) and 419–436 (IKCLKCGKPGHLAKDCRG). The disordered stretch occupies residues 479-504 (KEAPAAVCRERETNEKSEQKPPSEQS). The segment covering 486–504 (CRERETNEKSEQKPPSEQS) has biased composition (basic and acidic residues). In terms of domain architecture, Peptidase A2 spans 531–602 (VKALLDTGAD…TPINIIGRNF (72 aa)). The active-site For protease activity; shared with dimeric partner is the Asp-536. A Reverse transcriptase domain is found at 658–848 (EGKLSRVGGD…PPFEWMGYKL (191 aa)). Mg(2+) is bound by residues Asp-724, Asp-799, and Asp-800. Residues 841–849 (FEWMGYKLW) form an RT 'primer grip' region. Residues 1011-1027 (WEQWWADYWQVSWIPEW) carry the Tryptophan repeat motif motif. Positions 1047 to 1170 (IPGEDVYYVD…IDKLVSKGVR (124 aa)) constitute an RNase H type-1 domain. Residues Asp-1056, Glu-1091, Asp-1111, and Asp-1162 each coordinate Mg(2+). Residues 1176 to 1217 (GRIEEAQEEHDRYHSNWRNLADTFGLPQIVAKEIVAMCPKCQ) form an Integrase-type zinc finger. Zn(2+)-binding residues include His-1185, His-1189, Cys-1213, and Cys-1216. The Integrase catalytic domain maps to 1227 to 1377 (VDASPGVWQM…TAAERLINMI (151 aa)). Mg(2+)-binding residues include Asp-1237 and Asp-1289. Positions 1396-1443 (FRVYYREGRDPVWKGPARLIWKGEGAVVLKEGEELKVVPRRKAKIIKD) form a DNA-binding region, integrase-type. The tract at residues 1451–1470 (GDETHLEGAGGSDHQMAGDS) is disordered.

As to quaternary structure, homotrimer. Interacts with gp41 (via C-terminus). Homodimer. The active site consists of two apposed aspartic acid residues. In terms of assembly, heterodimer of p66 RT and p51 RT (RT p66/p51). Heterodimerization of RT is essential for DNA polymerase activity. Despite the sequence identities, p66 RT and p51 RT have distinct folding. As to quaternary structure, homotetramer; may further associate as a homohexadecamer. Requires Mg(2+) as cofactor. Post-translationally, specific enzymatic cleavages by the viral protease yield mature proteins. The protease is released by autocatalytic cleavage. The polyprotein is cleaved during and after budding, this process is termed maturation. Proteolytic cleavage of p66 RT removes the RNase H domain to yield the p51 RT subunit. In terms of processing, capsid protein p24 is phosphorylated.

It localises to the virion. It is found in the host nucleus. The protein localises to the host cytoplasm. Its subcellular location is the host cell membrane. The enzyme catalyses Specific for a P1 residue that is hydrophobic, and P1' variable, but often Pro.. It carries out the reaction Endohydrolysis of RNA in RNA/DNA hybrids. Three different cleavage modes: 1. sequence-specific internal cleavage of RNA. Human immunodeficiency virus type 1 and Moloney murine leukemia virus enzymes prefer to cleave the RNA strand one nucleotide away from the RNA-DNA junction. 2. RNA 5'-end directed cleavage 13-19 nucleotides from the RNA end. 3. DNA 3'-end directed cleavage 15-20 nucleotides away from the primer terminus.. The catalysed reaction is 3'-end directed exonucleolytic cleavage of viral RNA-DNA hybrid.. It catalyses the reaction DNA(n) + a 2'-deoxyribonucleoside 5'-triphosphate = DNA(n+1) + diphosphate. Its activity is regulated as follows. The viral protease is inhibited by many synthetic protease inhibitors (PIs), such as amprenavir, atazanavir, indinavir, loprinavir, nelfinavir, ritonavir and saquinavir. RT can be inhibited either by nucleoside RT inhibitors (NRTIs) or by non nucleoside RT inhibitors (NNRTIs). NRTIs act as chain terminators, whereas NNRTIs inhibit DNA polymerization by binding a small hydrophobic pocket near the RT active site and inducing an allosteric change in this region. Classical NRTIs are abacavir, adefovir (PMEA), didanosine (ddI), lamivudine (3TC), stavudine (d4T), tenofovir (PMPA), zalcitabine (ddC), and zidovudine (AZT). Classical NNRTIs are atevirdine (BHAP U-87201E), delavirdine, efavirenz (DMP-266), emivirine (I-EBU), and nevirapine (BI-RG-587). The tritherapies used as a basic effective treatment of AIDS associate two NRTIs and one NNRTI. Use of protease inhibitors in tritherapy regimens permit more ambitious therapeutic strategies. Gag-Pol polyprotein and Gag polyprotein may regulate their own translation, by the binding genomic RNA in the 5'-UTR. At low concentration, Gag-Pol and Gag would promote translation, whereas at high concentration, the polyproteins encapsidate genomic RNA and then shut off translation. In terms of biological role, matrix protein p17 has two main functions: in infected cell, it targets Gag and Gag-pol polyproteins to the plasma membrane via a multipartite membrane-binding signal, that includes its myristointegration complex. The myristoylation signal and the NLS exert conflicting influences its subcellular localization. The key regulation of these motifs might be phosphorylation of a portion of MA molecules on the C-terminal tyrosine at the time of virus maturation, by virion-associated cellular tyrosine kinase. Implicated in the release from host cell mediated by Vpu. Functionally, capsid protein p24 forms the conical core that encapsulates the genomic RNA-nucleocapsid complex in the virion. The core is constituted by capsid protein hexamer subunits. The core is disassembled soon after virion entry. Interaction with host PPIA/CYPA protects the virus from restriction by host TRIM5-alpha and from an unknown antiviral activity in host cells. This capsid restriction by TRIM5 is one of the factors which restricts SIV to the simian species. Its function is as follows. Nucleocapsid protein p7 encapsulates and protects viral dimeric unspliced (genomic) RNA. Binds these RNAs through its zinc fingers. Facilitates rearangement of nucleic acid secondary structure during retrotranscription of genomic RNA. This capability is referred to as nucleic acid chaperone activity. The aspartyl protease mediates proteolytic cleavages of Gag and Gag-Pol polyproteins during or shortly after the release of the virion from the plasma membrane. Cleavages take place as an ordered, step-wise cascade to yield mature proteins. This process is called maturation. Displays maximal activity during the budding process just prior to particle release from the cell. Also cleaves Nef and Vif, probably concomitantly with viral structural proteins on maturation of virus particles. Hydrolyzes host EIF4GI and PABP1 in order to shut off the capped cellular mRNA translation. The resulting inhibition of cellular protein synthesis serves to ensure maximal viral gene expression and to evade host immune response. In terms of biological role, reverse transcriptase/ribonuclease H (RT) is a multifunctional enzyme that converts the viral dimeric RNA genome into dsDNA in the cytoplasm, shortly after virus entry into the cell. This enzyme displays a DNA polymerase activity that can copy either DNA or RNA templates, and a ribonuclease H (RNase H) activity that cleaves the RNA strand of RNA-DNA heteroduplexes in a partially processive 3' to 5' endonucleasic mode. Conversion of viral genomic RNA into dsDNA requires many steps. A tRNA binds to the primer-binding site (PBS) situated at the 5'-end of the viral RNA. RT uses the 3' end of the tRNA primer to perform a short round of RNA-dependent minus-strand DNA synthesis. The reading proceeds through the U5 region and ends after the repeated (R) region which is present at both ends of viral RNA. The portion of the RNA-DNA heteroduplex is digested by the RNase H, resulting in a ssDNA product attached to the tRNA primer. This ssDNA/tRNA hybridizes with the identical R region situated at the 3' end of viral RNA. This template exchange, known as minus-strand DNA strong stop transfer, can be either intra- or intermolecular. RT uses the 3' end of this newly synthesized short ssDNA to perform the RNA-dependent minus-strand DNA synthesis of the whole template. RNase H digests the RNA template except for two polypurine tracts (PPTs) situated at the 5'-end and near the center of the genome. It is not clear if both polymerase and RNase H activities are simultaneous. RNase H can probably proceed both in a polymerase-dependent (RNA cut into small fragments by the same RT performing DNA synthesis) and a polymerase-independent mode (cleavage of remaining RNA fragments by free RTs). Secondly, RT performs DNA-directed plus-strand DNA synthesis using the PPTs that have not been removed by RNase H as primers. PPTs and tRNA primers are then removed by RNase H. The 3' and 5' ssDNA PBS regions hybridize to form a circular dsDNA intermediate. Strand displacement synthesis by RT to the PBS and PPT ends produces a blunt ended, linear dsDNA copy of the viral genome that includes long terminal repeats (LTRs) at both ends. Functionally, integrase catalyzes viral DNA integration into the host chromosome, by performing a series of DNA cutting and joining reactions. This enzyme activity takes place after virion entry into a cell and reverse transcription of the RNA genome in dsDNA. The first step in the integration process is 3' processing. This step requires a complex comprising the viral genome, matrix protein, Vpr and integrase. This complex is called the pre-integration complex (PIC). The integrase protein removes 2 nucleotides from each 3' end of the viral DNA, leaving recessed CA OH's at the 3' ends. In the second step, the PIC enters cell nucleus. This process is mediated through integrase and Vpr proteins, and allows the virus to infect a non dividing cell. This ability to enter the nucleus is specific of lentiviruses, other retroviruses cannot and rely on cell division to access cell chromosomes. In the third step, termed strand transfer, the integrase protein joins the previously processed 3' ends to the 5' ends of strands of target cellular DNA at the site of integration. The 5'-ends are produced by integrase-catalyzed staggered cuts, 5 bp apart. A Y-shaped, gapped, recombination intermediate results, with the 5'-ends of the viral DNA strands and the 3' ends of target DNA strands remaining unjoined, flanking a gap of 5 bp. The last step is viral DNA integration into host chromosome. This involves host DNA repair synthesis in which the 5 bp gaps between the unjoined strands are filled in and then ligated. Since this process occurs at both cuts flanking the SIV genome, a 5 bp duplication of host DNA is produced at the ends of SIV integration. Alternatively, Integrase may catalyze the excision of viral DNA just after strand transfer, this is termed disintegration. This chain is Gag-Pol polyprotein (gag-pol), found in Cercopithecidae (Old World monkeys).